Consider the following 423-residue polypeptide: Kynureninase (423 aa).

Pyridoxal 5'-phosphate contacts are provided by residues L105, S106, 133–136 (FPSD), D218, H221, and Y243. K244 is modified (N6-(pyridoxal phosphate)lysine). Residues W273 and N301 each contribute to the pyridoxal 5'-phosphate site.

The protein belongs to the kynureninase family. As to quaternary structure, homodimer. Pyridoxal 5'-phosphate is required as a cofactor.

The catalysed reaction is L-kynurenine + H2O = anthranilate + L-alanine + H(+). It carries out the reaction 3-hydroxy-L-kynurenine + H2O = 3-hydroxyanthranilate + L-alanine + H(+). It participates in amino-acid degradation; L-kynurenine degradation; L-alanine and anthranilate from L-kynurenine: step 1/1. Its pathway is cofactor biosynthesis; NAD(+) biosynthesis; quinolinate from L-kynurenine: step 2/3. Its function is as follows. Catalyzes the cleavage of L-kynurenine (L-Kyn) and L-3-hydroxykynurenine (L-3OHKyn) into anthranilic acid (AA) and 3-hydroxyanthranilic acid (3-OHAA), respectively. The polypeptide is Kynureninase (Xanthomonas oryzae pv. oryzae (strain MAFF 311018)).